We begin with the raw amino-acid sequence, 642 residues long: MHGLLLAAGLLSLPLHVLAHPQPSTTTSLAGRAGTVDLNEFRMAHRSSYTGNDEMMKQPSIASFRQGTYLEVATELVKQTMPNMEFRLVDDHYVGDSGIGHVRFRQTMHGIDIDNSDFNVNIGKDGKVLSHGNSFYTGPAPSSNPMVKRDFMDPMQALHGVRKALKLPIKADGATVQDMSEHKVMFKGTSGALSDPTAKLCYMAKEDGSLALTWRVETDIGDNWLLSYMDAKESAKVHNVVDYVAHATFQVYKWGLADPTEGNREILNNPWNLKTSPLTWLADGQNNFTATRGNNAIAQYNPDGGNDYENNYRPSPKNLKFEYPYSANMDPPKTYIDASVTQLFYTSNVCHDLYYMLGFTEKAGNFQVNNRGQGGKGGDYVILNAQDGSGTNNANFATPPDGQPGRMRAYIWTRANPPRDASFEAGTVIHEYTHGLSNRLCGGPANSRCLNAIESGGMGEGWGDFYATAIRLKPKDTRKTNYVKGGWVNNSPKGVRMYPYSTDMSVNPLVYTSNNKLNEVHAIGTVWCSMLYEVLWNLIDKHGKNDGPVPVFENGVPKDGKYLAMKIVMDAWPCIQPCNPNFVQARDAILDADKNLTKGANKCEIWKGFAKRGLGVGAKYDPKNRTGSNEVPKEYKYSAHME.

The N-terminal stretch at 1–19 (MHGLLLAAGLLSLPLHVLA) is a signal peptide. A propeptide spanning residues 20 to 246 (HPQPSTTTSL…VHNVVDYVAH (227 aa)) is cleaved from the precursor. N-linked (GlcNAc...) asparagine glycosylation occurs at asparagine 287. A Zn(2+)-binding site is contributed by histidine 430. Glutamate 431 is an active-site residue. Histidine 434 is a binding site for Zn(2+). 2 N-linked (GlcNAc...) asparagine glycosylation sites follow: asparagine 595 and asparagine 624.

It belongs to the peptidase M36 family. Zn(2+) serves as cofactor.

It localises to the secreted. Its function is as follows. Secreted metalloproteinase that allows assimilation of proteinaceous substrates and probably acts as a virulence factor. The chain is Extracellular metalloproteinase 5 (MEP5) from Arthroderma gypseum (strain ATCC MYA-4604 / CBS 118893) (Microsporum gypseum).